We begin with the raw amino-acid sequence, 290 residues long: Transmembrane protein 33 homolog (290 aa).

Disordered regions lie at residues 1-22 and 39-72; these read MSSPKFDSYDWENDPNWKEFTG and IDPNYKSSNNTTTQRPSTSSSSRTSSSSTSSPRA. Residues 45–72 show a composition bias toward low complexity; the sequence is SSNNTTTQRPSTSSSSRTSSSSTSSPRA. 4 consecutive transmembrane segments (helical) span residues 83–103, 109–129, 150–170, and 218–238; these read LYGAWVIAQISVILFTLFYFI, FFYKALLGATIAYSIPIFNTF, FVFYCMIFYFFGSSSLVYLLP, and IVLIAFFGIFSSFSNILLVFI.

This sequence belongs to the PER33/POM33 family.

It localises to the membrane. This Dictyostelium discoideum (Social amoeba) protein is Transmembrane protein 33 homolog (tmem33).